The following is a 183-amino-acid chain: Translation initiation factor IF-3 (183 aa).

The protein belongs to the IF-3 family. As to quaternary structure, monomer.

The protein resides in the cytoplasm. In terms of biological role, IF-3 binds to the 30S ribosomal subunit and shifts the equilibrium between 70S ribosomes and their 50S and 30S subunits in favor of the free subunits, thus enhancing the availability of 30S subunits on which protein synthesis initiation begins. The polypeptide is Translation initiation factor IF-3 (Pseudomonas entomophila (strain L48)).